The primary structure comprises 378 residues: Zinc transporter 7 (378 aa).

Over 1–37 the chain is Cytoplasmic; sequence MLPLSIKDDEYKPPKFNLFGKISGWFRSILSDKTSRN. The chain crosses the membrane as a helical span at residues 38 to 58; the sequence is LFFFLCLNLSFAFVELLYGIW. Residues 59 to 67 lie on the Lumenal side of the membrane; that stretch reads SNCLGLISD. Residues 68–88 form a helical membrane-spanning segment; the sequence is SFHMFFDSTAILAGLAASVIS. Residues 89 to 102 lie on the Cytoplasmic side of the membrane; that stretch reads KWRDNDAFSYGYVR. A helical membrane pass occupies residues 103–123; sequence AEVLAGFVNGLFLIFTAFFIF. Residues 124–140 are Lumenal-facing; sequence SEGVERALAPPDVHHER. The chain crosses the membrane as a helical span at residues 141 to 161; it reads LLLVSILGFVVNLVGIFVFNH. The interval 161 to 220 is his-rich loop; sequence HGGHGHSHGSGHGHSHSLFNGALDHSHGHEDHCHSHEAKHGAAHSHDHDHAHGHGHLHSH. The Cytoplasmic segment spans residues 162-238; that stretch reads GGHGHSHGSG…AGPSRQILQG (77 aa). Residues 186–223 are compositionally biased toward basic and acidic residues; that stretch reads SHGHEDHCHSHEAKHGAAHSHDHDHAHGHGHLHSHDGP. Residues 186–224 form a disordered region; the sequence is SHGHEDHCHSHEAKHGAAHSHDHDHAHGHGHLHSHDGPS. The chain crosses the membrane as a helical span at residues 239–259; that stretch reads VFLHILADTLGSIGVIASAIM. The Lumenal segment spans residues 260 to 264; it reads MQNFG. The chain crosses the membrane as a helical span at residues 265 to 285; the sequence is LMIADPICSILIAILIVVSVI. The Cytoplasmic portion of the chain corresponds to 286 to 378; it reads PLLRESVGIL…LYVQIDFAAM (93 aa).

It belongs to the cation diffusion facilitator (CDF) transporter (TC 2.A.4) family. SLC30A subfamily. Homooligomer. In terms of tissue distribution, highly expressed in liver, spleen, duodenum and part of the jejunum of small intestine (at protein level). Moderately expressed in kidney, lung, and brain. Barely detectable in heart. In brain, expressed in cerebellum, cerebral cortex and hippocampus (at protein level).

The protein resides in the golgi apparatus membrane. The protein localises to the cytoplasmic vesicle. It localises to the golgi apparatus. Its subcellular location is the trans-Golgi network. It is found in the sarcoplasmic reticulum. The protein resides in the mitochondrion. It carries out the reaction Zn(2+)(in) = Zn(2+)(out). Functionally, zinc ion transporter mediating zinc entry from the cytosol into the lumen of organelles along the secretory pathway. By contributing to zinc ion homeostasis within the early secretory pathway, regulates the activation and folding of enzymes like alkaline phosphatases. The chain is Zinc transporter 7 from Mus musculus (Mouse).